Consider the following 458-residue polypeptide: A-type ATP synthase subunit B (458 aa).

This sequence belongs to the ATPase alpha/beta chains family. In terms of assembly, has multiple subunits with at least A(3), B(3), C, D, E, F, H, I and proteolipid K(x).

It localises to the cell membrane. Component of the A-type ATP synthase that produces ATP from ADP in the presence of a proton gradient across the membrane. The B chain is a regulatory subunit. The chain is A-type ATP synthase subunit B from Methanocorpusculum labreanum (strain ATCC 43576 / DSM 4855 / Z).